Reading from the N-terminus, the 503-residue chain is Glycerol kinase (503 aa).

T14 is an ADP binding site. Residues T14, T15, and S16 each coordinate ATP. T14 contacts sn-glycerol 3-phosphate. R18 is an ADP binding site. Positions 84, 85, 136, and 246 each coordinate sn-glycerol 3-phosphate. Glycerol contacts are provided by R84, E85, Y136, D246, and Q247. Positions 268 and 311 each coordinate ADP. Positions 268, 311, 315, and 412 each coordinate ATP. ADP is bound by residues G412 and N416.

This sequence belongs to the FGGY kinase family. As to quaternary structure, homotetramer and homodimer (in equilibrium). Heterodimer with EIIA-Glc. Binds 1 zinc ion per glycerol kinase EIIA-Glc dimer. The zinc ion is important for dimerization.

The enzyme catalyses glycerol + ATP = sn-glycerol 3-phosphate + ADP + H(+). It participates in polyol metabolism; glycerol degradation via glycerol kinase pathway; sn-glycerol 3-phosphate from glycerol: step 1/1. With respect to regulation, activity of this regulatory enzyme is affected by several metabolites. Allosterically and non-competitively inhibited by fructose 1,6-bisphosphate (FBP) and unphosphorylated phosphocarrier protein EIIA-Glc (III-Glc), an integral component of the bacterial phosphotransferase (PTS) system. In terms of biological role, key enzyme in the regulation of glycerol uptake and metabolism. Catalyzes the phosphorylation of glycerol to yield sn-glycerol 3-phosphate. In Klebsiella pneumoniae (strain 342), this protein is Glycerol kinase.